The following is a 436-amino-acid chain: GTPase Der (436 aa).

2 consecutive EngA-type G domains span residues 4–165 (NVIA…NFDS) and 172–347 (FKLS…ENLE). GTP is bound by residues 10–17 (GKPNVGKS), 57–61 (DTGGI), 119–122 (NKLD), 178–185 (GQPNSGKS), 225–229 (DTAGI), and 290–293 (NKWD). The region spanning 348–432 (REIKPSVLTN…PINIIFKNKS (85 aa)) is the KH-like domain.

Belongs to the TRAFAC class TrmE-Era-EngA-EngB-Septin-like GTPase superfamily. EngA (Der) GTPase family. In terms of assembly, associates with the 50S ribosomal subunit.

Its function is as follows. GTPase that plays an essential role in the late steps of ribosome biogenesis. The chain is GTPase Der from Mycoplasmopsis agalactiae (strain NCTC 10123 / CIP 59.7 / PG2) (Mycoplasma agalactiae).